The following is a 227-amino-acid chain: Ion-translocating oxidoreductase complex subunit E (227 aa).

The next 6 helical transmembrane spans lie at 18 to 38 (ALVQ…VTNA), 39 to 59 (LGLG…VSLV), 69 to 89 (IPVF…LMNA), 93 to 113 (GLYL…IIIG), 125 to 145 (LPAV…LVLL), and 182 to 202 (HFLL…LIAL).

The protein belongs to the NqrDE/RnfAE family. The complex is composed of six subunits: RnfA, RnfB, RnfC, RnfD, RnfE and RnfG.

Its subcellular location is the cell inner membrane. Its function is as follows. Part of a membrane-bound complex that couples electron transfer with translocation of ions across the membrane. The chain is Ion-translocating oxidoreductase complex subunit E from Aliivibrio fischeri (strain MJ11) (Vibrio fischeri).